A 284-amino-acid polypeptide reads, in one-letter code: Nodulation protein O (284 aa).

A disordered region spans residues 1 to 27; the sequence is MNIKGSDNGSFIKGSPENDIIDGGKKN. Hemolysin-type calcium-binding repeat units follow at residues 13 to 30, 31 to 48, 58 to 75, 94 to 111, and 112 to 129; these read KGSP…NDWI, DAGN…QDSI, WAGK…DDLL, HSGE…SDIL, and VAGD…GDAF. The Ca(2+) site is built by aspartate 100, aspartate 109, aspartate 118, and aspartate 127. The tract at residues 208–222 is export signal (aspartic acid box); sequence DRGFASAAAAATAID.

It is found in the secreted. Its function is as follows. The NodO protein may play a role in nodule development by direct interaction with the root hair cells or some other plant surface in a calcium-dependent manner. This Rhizobium leguminosarum bv. viciae protein is Nodulation protein O (nodO).